We begin with the raw amino-acid sequence, 354 residues long: Bacteriochlorophyll a protein (354 aa).

The bacteriochlorophyll a site is built by His-99, His-134, His-278, His-285, and His-286.

In terms of assembly, homotrimer. Each subunit contains 7 molecules of bacteriochlorophyll a.

In terms of biological role, intermediary in the transfer of excitation energy from the chlorophyll to the reaction centers. The sequence is that of Bacteriochlorophyll a protein (fmoA) from Chlorobaculum thiosulfatiphilum (Chlorobium limicola f.sp. thiosulfatophilum).